The following is a 443-amino-acid chain: Ribosomal protein uS12 methylthiotransferase RimO (443 aa).

One can recognise an MTTase N-terminal domain in the interval 10–120 (PRVGFVSLGC…VVKAVHQHLP (111 aa)). [4Fe-4S] cluster-binding residues include Cys-19, Cys-55, Cys-84, Cys-151, Cys-155, and Cys-158. One can recognise a Radical SAM core domain in the interval 137–375 (LTPAHYAYLK…DFQEDISTQR (239 aa)). Residues 377–443 (ERWIGRDITV…VHDLYARPLP (67 aa)) enclose the TRAM domain.

It belongs to the methylthiotransferase family. RimO subfamily. [4Fe-4S] cluster is required as a cofactor.

Its subcellular location is the cytoplasm. The enzyme catalyses L-aspartate(89)-[ribosomal protein uS12]-hydrogen + (sulfur carrier)-SH + AH2 + 2 S-adenosyl-L-methionine = 3-methylsulfanyl-L-aspartate(89)-[ribosomal protein uS12]-hydrogen + (sulfur carrier)-H + 5'-deoxyadenosine + L-methionine + A + S-adenosyl-L-homocysteine + 2 H(+). Functionally, catalyzes the methylthiolation of an aspartic acid residue of ribosomal protein uS12. The chain is Ribosomal protein uS12 methylthiotransferase RimO from Aromatoleum aromaticum (strain DSM 19018 / LMG 30748 / EbN1) (Azoarcus sp. (strain EbN1)).